The primary structure comprises 406 residues: Methylthioribose-1-phosphate isomerase (406 aa).

Asp-277 acts as the Proton donor in catalysis.

It belongs to the eIF-2B alpha/beta/delta subunits family. MtnA subfamily.

The protein localises to the cytoplasm. Its subcellular location is the nucleus. The catalysed reaction is 5-(methylsulfanyl)-alpha-D-ribose 1-phosphate = 5-(methylsulfanyl)-D-ribulose 1-phosphate. Its pathway is amino-acid biosynthesis; L-methionine biosynthesis via salvage pathway; L-methionine from S-methyl-5-thio-alpha-D-ribose 1-phosphate: step 1/6. In terms of biological role, catalyzes the interconversion of methylthioribose-1-phosphate (MTR-1-P) into methylthioribulose-1-phosphate (MTRu-1-P). The protein is Methylthioribose-1-phosphate isomerase of Debaryomyces hansenii (strain ATCC 36239 / CBS 767 / BCRC 21394 / JCM 1990 / NBRC 0083 / IGC 2968) (Yeast).